We begin with the raw amino-acid sequence, 170 residues long: Tachykinin-4 (170 aa).

A signal peptide spans 1–16 (MLPLLALFLLIGPAVS). Positions 17 to 54 (TTTRDREDLTFGAEAESWVTVNLKGIPVPSIELKLQEL) are excised as a propeptide. M66 is subject to Methionine amide. A propeptide spanning residues 67–170 (GKRVEGVHPI…SQMMPRPSRP (104 aa)) is cleaved from the precursor. A disordered region spans residues 107-170 (QETNHQSAGP…SQMMPRPSRP (64 aa)). Residues 123–140 (SLQSQRGRSEPPNHQQHV) show a composition bias toward polar residues.

The protein belongs to the tachykinin family.

The protein localises to the secreted. Its function is as follows. Tachykinins are active peptides which excite neurons, evoke behavioral responses, are potent vasodilators and secretagogues, and contract (directly or indirectly) many smooth muscles. Hemokinin induces plasma extravasation, mast cell degranulation, muscle contraction, salivary secretion and scratching behavior. Increases sperm motility. Induces potent analgesic effects and may play a role in pain modulation. Promotes survival of bone marrow B lineage cells and of cultured LPS-stimulated pre-B cells and may act as an autocrine factor required for B-cell survival and proliferation. Lowers systemic arterial pressure following intravenous injection. Induces interferon-gamma production and may play a role in the inflammatory response. Shows potent affinity and specificity for the NK-1 receptor. The sequence is that of Tachykinin-4 from Rattus norvegicus (Rat).